A 354-amino-acid chain; its full sequence is CCN family member 3 (354 aa).

The N-terminal stretch at 1–21 (MSLFLRKRCLCLGFLLFHLLS) is a signal peptide. Positions 25–99 (ASLRCPSRCP…NNQTGICMVP (75 aa)) constitute an IGFBP N-terminal domain. Intrachain disulfides connect Cys29–Cys55, Cys33–Cys57, Cys37–Cys58, Cys44–Cys61, Cys69–Cys83, and Cys75–Cys96. Asn91 is a glycosylation site (N-linked (GlcNAc...) asparagine). The 67-residue stretch at 102 to 168 (DNCVFDGVIY…GECCEKWTCG (67 aa)) folds into the VWFC domain. The region spanning 202–247 (NCIEQTTEWSACSKSCGMGVSTRVTNRNRQCEMVKQTRLCIVRPCE) is the TSP type-1 domain. Cys241 carries the S-palmitoyl cysteine lipid modification. 5 cysteine pairs are disulfide-bonded: Cys261-Cys298, Cys278-Cys312, Cys289-Cys328, Cys292-Cys330, and Cys297-Cys334. In terms of domain architecture, CTCK spans 261–335 (CLRTKKSLKA…GTCTCYSNCP (75 aa)). Asn277 carries N-linked (GlcNAc...) asparagine glycosylation.

This sequence belongs to the CCN family. As to quaternary structure, interacts with FBLN1. Interacts (via CTCK domain) with NOTCH1 (via the EGF-like repeat region). Interacts with GJA1/CX43. Interacts with ITGA5:ITGB1, ITGAV:ITGB3 and ITGAV:ITGB5. Interacts with ZDHHC22; the interaction may lead to CCN3 palmitoylation. Post-translationally, may be palmitoylated on Cys-241, which is important for extracellular secretion. In terms of tissue distribution, expressed in large vessels including the ascending aorta, carotid arteries, and the thoracic aorta, in medium-sized vessels such as coronary arteries and small pulmonary veins and also in small vessels. In addition, also found to be present in the heart (at protein level). Expressed in astrocytes (at protein level). Detected in brain, bone, lung and muscle tissues. Expressed in skin, expression highly increases 5 days post-wounding, peaking on the 7th day to decline after 9 days. Expressed in pancreatic ducts and beta-cell islets. Expressed in the brain, in arcuate nucleus ESR1/KISS1 neurons, during lactation (at protein level).

The protein resides in the secreted. The protein localises to the cytoplasm. It localises to the cell junction. It is found in the gap junction. In terms of biological role, immediate-early protein playing a role in various cellular processes including proliferation, adhesion, migration, differentiation and survival. Acts by binding to integrins or membrane receptors such as NOTCH1. Essential regulator of hematopoietic stem and progenitor cell function. Inhibits myogenic differentiation through the activation of Notch-signaling pathway. Inhibits vascular smooth muscle cells proliferation by increasing expression of cell-cycle regulators such as CDKN2B or CDKN1A independently of TGFB1 signaling. Ligand of integrins ITGAV:ITGB3 and ITGA5:ITGB1, acts directly upon endothelial cells to stimulate pro-angiogenic activities and induces angiogenesis. In endothelial cells, supports cell adhesion, induces directed cell migration (chemotaxis) and promotes cell survival. Also plays a role in cutaneous wound healing acting as integrin receptor ligand. Supports skin fibroblast adhesion through ITGA5:ITGB1 and ITGA6:ITGB1 and induces fibroblast chemotaxis through ITGAV:ITGB5. Seems to enhance bFGF-induced DNA synthesis in fibroblasts. Involved in bone regeneration as a negative regulator. Enhances the articular chondrocytic phenotype, whereas it repressed the one representing endochondral ossification. Impairs pancreatic beta-cell function, inhibits beta-cell proliferation and insulin secretion. Plays a role as negative regulator of endothelial pro-inflammatory activation reducing monocyte adhesion, its anti-inflammatory effects occur secondary to the inhibition of NF-kappaB signaling pathway. Contributes to the control and coordination of inflammatory processes in atherosclerosis. Attenuates inflammatory pain through regulation of IL1B- and TNF-induced MMP9, MMP2 and CCL2 expression. Inhibits MMP9 expression through ITGB1 engagement. Brain osteoanabolic hormone. During lactation, maintains the maternal skeleton and viability of offspring. In this context, may act on osteochondral skeletal stem cells. The polypeptide is CCN family member 3 (Ccn3) (Mus musculus (Mouse)).